The primary structure comprises 560 residues: Nucleoprotein (560 aa).

Positions leucine 54–isoleucine 236 are binding site for the cap structure m7GTP. A compositionally biased stretch (polar residues) spans glycine 323–aspartate 332. Residues glycine 323 to glutamine 349 form a disordered region. 2 residues coordinate Mn(2+): aspartate 380 and glutamate 382. 4 residues coordinate Zn(2+): glutamate 390, cysteine 497, histidine 500, and cysteine 521. Aspartate 525 lines the Mn(2+) pocket.

This sequence belongs to the arenaviridae nucleocapsid protein family. Homomultimerizes to form the nucleocapsid. Binds to viral genomic RNA. Interacts with glycoprotein G2. Interacts with protein Z; this interaction probably directs the encapsidated genome to budding sites. Interacts with protein L; this interaction does not interfere with Z-L interaction. Interacts with host IKBKE (via Protein kinase domain); the interaction inhibits IKBKE kinase activity.

It localises to the virion. The protein resides in the host cytoplasm. In terms of biological role, encapsidates the genome, protecting it from nucleases. The encapsidated genomic RNA is termed the nucleocapsid (NC). Serves as template for viral transcription and replication. The increased presence of protein N in host cell does not seem to trigger the switch from transcription to replication as observed in other negative strain RNA viruses. Through the interaction with host IKBKE, strongly inhibits the phosphorylation and nuclear translocation of host IRF3, a protein involved in interferon activation pathway, leading to the inhibition of interferon-beta and IRF3-dependent promoters activation. Also encodes a functional 3'-5' exoribonuclease that degrades preferentially dsRNA substrates and thereby participates in the suppression of interferon induction. This chain is Nucleoprotein, found in Cupixi mammarenavirus (isolate Rat/Brasil/BeAn 119303/1970) (CPXV).